Reading from the N-terminus, the 224-residue chain is Twisted gastrulation protein homolog 1 (224 aa).

The N-terminal stretch at Met1–Gly26 is a signal peptide. 3 N-linked (GlcNAc...) asparagine glycosylation sites follow: Asn53, Asn82, and Asn148.

This sequence belongs to the twisted gastrulation protein family. As to quaternary structure, interacts with CHRD and BMP4. This interaction enhances CHRD/BMP4 complex formation. Interacts with BMP7.

It localises to the secreted. In terms of biological role, may be involved in dorsoventral axis formation. Seems to antagonize BMP signaling by forming ternary complexes with CHRD and BMPs, thereby preventing BMPs from binding to their receptors. In addition to the anti-BMP function, also has pro-BMP activity, partly mediated by cleavage and degradation of CHRD, which releases BMPs from ternary complexes. May be an important modulator of BMP-regulated cartilage development and chondrocyte differentiation. May play a role in thymocyte development. This is Twisted gastrulation protein homolog 1 (TWSG1) from Gallus gallus (Chicken).